The sequence spans 150 residues: MPSILLLNGPNLNLLGTREPHLYGTTTLNDVETVAKELAASYGAEVECLQSNHEGVLIDRIHEARGKSQAVVINPGAFTHTSVALRDALLGVGLPFIEVHITNVHARESFRHHSYLSDKAAAVIIGLGTFGYQVAVKHALENLVGLEERK.

The Proton acceptor role is filled by Y23. N74, H80, and D87 together coordinate substrate. The active-site Proton donor is H100. Residues 101-102 (IT) and R111 contribute to the substrate site.

This sequence belongs to the type-II 3-dehydroquinase family. In terms of assembly, homododecamer. Adopts a ring-like structure, composed of an arrangement of two hexameric rings stacked on top of one another.

It catalyses the reaction 3-dehydroquinate = 3-dehydroshikimate + H2O. The protein operates within aromatic compound metabolism; 3,4-dihydroxybenzoate biosynthesis; 3,4-dihydroxybenzoate from 3-dehydroquinate: step 1/2. Functionally, is involved in the catabolism of quinate. Allows the utilization of quinate as carbon source via the beta-ketoadipate pathway. The polypeptide is Catabolic 3-dehydroquinase 2 (Aspergillus flavus (strain ATCC 200026 / FGSC A1120 / IAM 13836 / NRRL 3357 / JCM 12722 / SRRC 167)).